A 127-amino-acid polypeptide reads, in one-letter code: Large ribosomal subunit protein bL17 (127 aa).

Belongs to the bacterial ribosomal protein bL17 family. Part of the 50S ribosomal subunit. Contacts protein L32.

This is Large ribosomal subunit protein bL17 from Mannheimia succiniciproducens (strain KCTC 0769BP / MBEL55E).